Reading from the N-terminus, the 430-residue chain is Serine hydroxymethyltransferase 1 (430 aa).

(6S)-5,6,7,8-tetrahydrofolate is bound by residues leucine 132 and 136 to 138 (GHL). Lysine 241 carries the N6-(pyridoxal phosphate)lysine modification.

Belongs to the SHMT family. As to quaternary structure, homodimer. The cofactor is pyridoxal 5'-phosphate.

The protein resides in the cytoplasm. It carries out the reaction (6R)-5,10-methylene-5,6,7,8-tetrahydrofolate + glycine + H2O = (6S)-5,6,7,8-tetrahydrofolate + L-serine. The protein operates within one-carbon metabolism; tetrahydrofolate interconversion. Its pathway is amino-acid biosynthesis; glycine biosynthesis; glycine from L-serine: step 1/1. Catalyzes the reversible interconversion of serine and glycine with tetrahydrofolate (THF) serving as the one-carbon carrier. This reaction serves as the major source of one-carbon groups required for the biosynthesis of purines, thymidylate, methionine, and other important biomolecules. Also exhibits THF-independent aldolase activity toward beta-hydroxyamino acids, producing glycine and aldehydes, via a retro-aldol mechanism. This chain is Serine hydroxymethyltransferase 1, found in Bordetella parapertussis (strain 12822 / ATCC BAA-587 / NCTC 13253).